Consider the following 65-residue polypeptide: Large ribosomal subunit protein bL35 (65 aa).

Belongs to the bacterial ribosomal protein bL35 family.

The polypeptide is Large ribosomal subunit protein bL35 (Aliarcobacter butzleri (strain RM4018) (Arcobacter butzleri)).